The chain runs to 34 residues: uncharacterized protein (34 aa).

Residues 10 to 30 (LIITSSFFAIAAVLVLSVLLI) traverse the membrane as a helical segment.

It localises to the membrane. This is an uncharacterized protein from Escherichia coli O6:H1 (strain CFT073 / ATCC 700928 / UPEC).